The chain runs to 242 residues: Glutathione S-transferase 3 (242 aa).

The region spanning 1–79 (MIVLHHLKNS…HLVRKYGPSF (79 aa)) is the GST N-terminal domain. Positions 85-234 (DVAELEKYEL…ERYSHPPTPP (150 aa)) constitute a GST C-terminal domain. S228 bears the Phosphoserine mark. A Phosphothreonine modification is found at T232.

This sequence belongs to the GST superfamily. In terms of assembly, interacts with sad1.

It is found in the cytoplasm. It catalyses the reaction RX + glutathione = an S-substituted glutathione + a halide anion + H(+). Functionally, may have a role in the detoxification of various heavy metals. This is Glutathione S-transferase 3 (gst3) from Schizosaccharomyces pombe (strain 972 / ATCC 24843) (Fission yeast).